We begin with the raw amino-acid sequence, 506 residues long: ATP synthase subunit alpha (506 aa).

171-178 (GDRQTGKT) contributes to the ATP binding site.

It belongs to the ATPase alpha/beta chains family. In terms of assembly, F-type ATPases have 2 components, CF(1) - the catalytic core - and CF(0) - the membrane proton channel. CF(1) has five subunits: alpha(3), beta(3), gamma(1), delta(1), epsilon(1). CF(0) has four main subunits: a(1), b(1), b'(1) and c(9-12).

The protein resides in the cellular thylakoid membrane. It catalyses the reaction ATP + H2O + 4 H(+)(in) = ADP + phosphate + 5 H(+)(out). Produces ATP from ADP in the presence of a proton gradient across the membrane. The alpha chain is a regulatory subunit. This Nostoc sp. (strain PCC 7120 / SAG 25.82 / UTEX 2576) protein is ATP synthase subunit alpha.